The sequence spans 346 residues: Ribonucleoside-diphosphate reductase subunit beta (346 aa).

Residues glutamate 89, glutamate 120, and histidine 123 each coordinate Fe cation. The active site involves tyrosine 129. 3 residues coordinate Fe cation: glutamate 193, glutamate 227, and histidine 230.

Belongs to the ribonucleoside diphosphate reductase small chain family. As to quaternary structure, tetramer of two alpha and two beta subunits. Fe cation is required as a cofactor.

It carries out the reaction a 2'-deoxyribonucleoside 5'-diphosphate + [thioredoxin]-disulfide + H2O = a ribonucleoside 5'-diphosphate + [thioredoxin]-dithiol. Its function is as follows. Provides the precursors necessary for DNA synthesis. Catalyzes the biosynthesis of deoxyribonucleotides from the corresponding ribonucleotides. This is Ribonucleoside-diphosphate reductase subunit beta (nrdB) from Chlamydia muridarum (strain MoPn / Nigg).